Here is a 464-residue protein sequence, read N- to C-terminus: Soluble pyridine nucleotide transhydrogenase (464 aa).

35–44 (DSRRQVGGNC) contacts FAD.

Belongs to the class-I pyridine nucleotide-disulfide oxidoreductase family. FAD is required as a cofactor.

Its subcellular location is the cytoplasm. The catalysed reaction is NAD(+) + NADPH = NADH + NADP(+). Functionally, conversion of NADPH, generated by peripheral catabolic pathways, to NADH, which can enter the respiratory chain for energy generation. The polypeptide is Soluble pyridine nucleotide transhydrogenase (Pseudomonas fluorescens (strain SBW25)).